The sequence spans 331 residues: Probable deacetylase MTH_1194 (331 aa).

Histidine 118 (proton donor/acceptor) is an active-site residue. Zn(2+)-binding residues include aspartate 155, histidine 157, and aspartate 244.

It belongs to the histone deacetylase family. Zn(2+) is required as a cofactor.

In terms of biological role, probable deacetylase. This Methanothermobacter thermautotrophicus (strain ATCC 29096 / DSM 1053 / JCM 10044 / NBRC 100330 / Delta H) (Methanobacterium thermoautotrophicum) protein is Probable deacetylase MTH_1194.